A 117-amino-acid polypeptide reads, in one-letter code: Large ribosomal subunit protein bL20 (117 aa).

This sequence belongs to the bacterial ribosomal protein bL20 family.

In terms of biological role, binds directly to 23S ribosomal RNA and is necessary for the in vitro assembly process of the 50S ribosomal subunit. It is not involved in the protein synthesizing functions of that subunit. In Marinobacter nauticus (strain ATCC 700491 / DSM 11845 / VT8) (Marinobacter aquaeolei), this protein is Large ribosomal subunit protein bL20.